A 336-amino-acid chain; its full sequence is F420-dependent glucose-6-phosphate dehydrogenase (336 aa).

Aspartate 37 is a binding site for coenzyme F420-(gamma-Glu)n. The active-site Proton donor is histidine 38. Residues threonine 74 and serine 105 to glycine 106 each bind coenzyme F420-(gamma-Glu)n. Glutamate 107 serves as the catalytic Proton acceptor. Coenzyme F420-(gamma-Glu)n-binding positions include asparagine 110, serine 173 to glycine 174, and serine 176 to alanine 177. 4 residues coordinate substrate: threonine 191, lysine 194, lysine 255, and arginine 279.

It belongs to the F420-dependent glucose-6-phosphate dehydrogenase family. As to quaternary structure, homodimer.

It carries out the reaction oxidized coenzyme F420-(gamma-L-Glu)(n) + D-glucose 6-phosphate + H(+) = 6-phospho-D-glucono-1,5-lactone + reduced coenzyme F420-(gamma-L-Glu)(n). Functionally, catalyzes the coenzyme F420-dependent oxidation of glucose 6-phosphate (G6P) to 6-phosphogluconolactone. The chain is F420-dependent glucose-6-phosphate dehydrogenase from Beutenbergia cavernae (strain ATCC BAA-8 / DSM 12333 / CCUG 43141 / JCM 11478 / NBRC 16432 / NCIMB 13614 / HKI 0122).